A 504-amino-acid chain; its full sequence is Putative arrestin-related trafficking adapter SPBC839.02 (504 aa).

The segment at 481-504 (QAPPPKYDDIFQSGSSHDENHDDN) is disordered.

The protein belongs to the ALY1 family.

In terms of biological role, may regulate endocytosis in response to extracellular stimuli. This chain is Putative arrestin-related trafficking adapter SPBC839.02, found in Schizosaccharomyces pombe (strain 972 / ATCC 24843) (Fission yeast).